We begin with the raw amino-acid sequence, 287 residues long: Glycine--tRNA ligase alpha subunit (287 aa).

This sequence belongs to the class-II aminoacyl-tRNA synthetase family. As to quaternary structure, tetramer of two alpha and two beta subunits.

Its subcellular location is the cytoplasm. It carries out the reaction tRNA(Gly) + glycine + ATP = glycyl-tRNA(Gly) + AMP + diphosphate. The sequence is that of Glycine--tRNA ligase alpha subunit from Campylobacter jejuni subsp. jejuni serotype O:6 (strain 81116 / NCTC 11828).